Here is a 384-residue protein sequence, read N- to C-terminus: 8-amino-7-oxononanoate synthase (384 aa).

Position 21 (Arg-21) interacts with substrate. 108 to 109 (GF) provides a ligand contact to pyridoxal 5'-phosphate. Position 133 (His-133) interacts with substrate. Pyridoxal 5'-phosphate contacts are provided by Ser-179, His-207, and Thr-233. Position 236 is an N6-(pyridoxal phosphate)lysine (Lys-236). Thr-352 contacts substrate.

Belongs to the class-II pyridoxal-phosphate-dependent aminotransferase family. BioF subfamily. As to quaternary structure, homodimer. Pyridoxal 5'-phosphate serves as cofactor.

The enzyme catalyses 6-carboxyhexanoyl-[ACP] + L-alanine + H(+) = (8S)-8-amino-7-oxononanoate + holo-[ACP] + CO2. It functions in the pathway cofactor biosynthesis; biotin biosynthesis. Its function is as follows. Catalyzes the decarboxylative condensation of pimeloyl-[acyl-carrier protein] and L-alanine to produce 8-amino-7-oxononanoate (AON), [acyl-carrier protein], and carbon dioxide. This chain is 8-amino-7-oxononanoate synthase, found in Citrobacter koseri (strain ATCC BAA-895 / CDC 4225-83 / SGSC4696).